The following is a 424-amino-acid chain: N-succinylarginine dihydrolase (424 aa).

Substrate-binding positions include 19-28 (AGLSRGNVAS), asparagine 110, and 137-138 (HR). The active site involves glutamate 174. Arginine 206 serves as a coordination point for substrate. Histidine 242 is an active-site residue. Substrate-binding residues include aspartate 244 and asparagine 351. Cysteine 357 functions as the Nucleophile in the catalytic mechanism.

It belongs to the succinylarginine dihydrolase family. As to quaternary structure, homodimer.

It catalyses the reaction N(2)-succinyl-L-arginine + 2 H2O + 2 H(+) = N(2)-succinyl-L-ornithine + 2 NH4(+) + CO2. It participates in amino-acid degradation; L-arginine degradation via AST pathway; L-glutamate and succinate from L-arginine: step 2/5. Catalyzes the hydrolysis of N(2)-succinylarginine into N(2)-succinylornithine, ammonia and CO(2). This Zymomonas mobilis subsp. mobilis (strain ATCC 31821 / ZM4 / CP4) protein is N-succinylarginine dihydrolase.